Consider the following 139-residue polypeptide: S-adenosylmethionine decarboxylase proenzyme (139 aa).

Serine 63 (schiff-base intermediate with substrate; via pyruvic acid) is an active-site residue. Serine 63 carries the pyruvic acid (Ser); by autocatalysis modification. Catalysis depends on histidine 68, which acts as the Proton acceptor; for processing activity. The active-site Proton donor; for catalytic activity is cysteine 83.

This sequence belongs to the prokaryotic AdoMetDC family. Type 1 subfamily. As to quaternary structure, heterotetramer of two alpha and two beta chains arranged as a dimer of alpha/beta heterodimers. Pyruvate serves as cofactor. In terms of processing, is synthesized initially as an inactive proenzyme. Formation of the active enzyme involves a self-maturation process in which the active site pyruvoyl group is generated from an internal serine residue via an autocatalytic post-translational modification. Two non-identical subunits are generated from the proenzyme in this reaction, and the pyruvate is formed at the N-terminus of the alpha chain, which is derived from the carboxyl end of the proenzyme. The post-translation cleavage follows an unusual pathway, termed non-hydrolytic serinolysis, in which the side chain hydroxyl group of the serine supplies its oxygen atom to form the C-terminus of the beta chain, while the remainder of the serine residue undergoes an oxidative deamination to produce ammonia and the pyruvoyl group blocking the N-terminus of the alpha chain.

The catalysed reaction is S-adenosyl-L-methionine + H(+) = S-adenosyl 3-(methylsulfanyl)propylamine + CO2. It participates in amine and polyamine biosynthesis; S-adenosylmethioninamine biosynthesis; S-adenosylmethioninamine from S-adenosyl-L-methionine: step 1/1. Its function is as follows. Catalyzes the decarboxylation of S-adenosylmethionine to S-adenosylmethioninamine (dcAdoMet), the propylamine donor required for the synthesis of the polyamines spermine and spermidine from the diamine putrescine. The chain is S-adenosylmethionine decarboxylase proenzyme from Pyrococcus abyssi (strain GE5 / Orsay).